Consider the following 139-residue polypeptide: Putative pre-16S rRNA nuclease (139 aa).

The protein belongs to the YqgF nuclease family.

Its subcellular location is the cytoplasm. Its function is as follows. Could be a nuclease involved in processing of the 5'-end of pre-16S rRNA. In Proteus mirabilis (strain HI4320), this protein is Putative pre-16S rRNA nuclease.